We begin with the raw amino-acid sequence, 56 residues long: Large ribosomal subunit protein bL32 (56 aa).

The tract at residues 1–39 (MAVQQNKKSRSKRGMRRSHDSLSTAQLSVDATSGELHRR) is disordered. Residues 7 to 16 (KKSRSKRGMR) are compositionally biased toward basic residues. A compositionally biased stretch (polar residues) spans 21-31 (SLSTAQLSVDA).

It belongs to the bacterial ribosomal protein bL32 family.

This chain is Large ribosomal subunit protein bL32, found in Shewanella piezotolerans (strain WP3 / JCM 13877).